The chain runs to 461 residues: Cysteine--tRNA ligase (461 aa).

Position 28 (Cys-28) interacts with Zn(2+). The short motif at 30-40 (ITVYDLCHIGH) is the 'HIGH' region element. The Zn(2+) site is built by Cys-209, His-234, and Glu-238. The 'KMSKS' region signature appears at 266–270 (KMSKS). An ATP-binding site is contributed by Lys-269.

This sequence belongs to the class-I aminoacyl-tRNA synthetase family. As to quaternary structure, monomer. Zn(2+) serves as cofactor.

It is found in the cytoplasm. The enzyme catalyses tRNA(Cys) + L-cysteine + ATP = L-cysteinyl-tRNA(Cys) + AMP + diphosphate. The chain is Cysteine--tRNA ligase from Escherichia fergusonii (strain ATCC 35469 / DSM 13698 / CCUG 18766 / IAM 14443 / JCM 21226 / LMG 7866 / NBRC 102419 / NCTC 12128 / CDC 0568-73).